Here is a 278-residue protein sequence, read N- to C-terminus: Neuronal membrane glycoprotein M6-a (278 aa).

Residue Met-1 is modified to N-acetylmethionine. Residues Met-1–Leu-22 are Cytoplasmic-facing. The chain crosses the membrane as a helical span at residues Gly-23–Phe-43. The Extracellular portion of the chain corresponds to Cys-44–Val-84. Residues Ile-85–Phe-105 form a helical membrane-spanning segment. Residues Thr-106–Ser-127 lie on the Cytoplasmic side of the membrane. The chain crosses the membrane as a helical span at residues Ala-128 to Thr-148. Residues Ser-149–Leu-213 are Extracellular-facing. N-linked (GlcNAc...) asparagine glycosylation is present at Asn-164. Residues Cys-174 and Cys-192 are joined by a disulfide bond. Residue Asn-208 is glycosylated (N-linked (GlcNAc...) asparagine). A helical membrane pass occupies residues Phe-214–Val-234. The Cytoplasmic portion of the chain corresponds to Leu-235–Thr-278. Ser-256 is subject to Phosphoserine. A Phosphothreonine modification is found at Thr-278.

This sequence belongs to the myelin proteolipid protein family. In terms of assembly, interacts with OPRM1. Interacts with palmitoyltransferase ZDHHC17/HIP14; the interaction leads to palmitoylation of GPM6A. Post-translationally, N-glycosylated. In terms of processing, palmitoylated by ZDHHC17/HIP14. As to expression, expressed in hippocampus (at protein level). Isoform 1 is the predominant isoform expressed in brain, specifically in hippocampus. Isoform 2 is expressed at low levels in brain and kidney.

Its subcellular location is the cell membrane. The protein resides in the cell projection. The protein localises to the axon. It is found in the growth cone. It localises to the dendritic spine. Its subcellular location is the filopodium. The protein resides in the neuron projection. In terms of biological role, involved in neuronal differentiation, including differentiation and migration of neuronal stem cells. Plays a role in neuronal plasticity and is involved in neurite and filopodia outgrowth, filopodia motility and probably synapse formation. Gpm6a-induced filopodia formation involves mitogen-activated protein kinase (MAPK) and Src signaling pathways. May be involved in neuronal NGF-dependent Ca(2+) influx. May be involved in regulation of endocytosis and intracellular trafficking of G-protein-coupled receptors (GPCRs); enhances internalization and recycling of mu-type opioid receptor. The chain is Neuronal membrane glycoprotein M6-a (Gpm6a) from Rattus norvegicus (Rat).